The primary structure comprises 41 residues: Large ribosomal subunit protein bL36 (41 aa).

Belongs to the bacterial ribosomal protein bL36 family.

This is Large ribosomal subunit protein bL36 from Gluconobacter oxydans (strain 621H) (Gluconobacter suboxydans).